The following is a 208-amino-acid chain: Large ribosomal subunit protein uL4 (208 aa).

A disordered region spans residues 54-78; the sequence is RAEVSHTTKKPWNQKGTGRARAGMS.

It belongs to the universal ribosomal protein uL4 family. As to quaternary structure, part of the 50S ribosomal subunit.

Its function is as follows. One of the primary rRNA binding proteins, this protein initially binds near the 5'-end of the 23S rRNA. It is important during the early stages of 50S assembly. It makes multiple contacts with different domains of the 23S rRNA in the assembled 50S subunit and ribosome. Functionally, forms part of the polypeptide exit tunnel. The sequence is that of Large ribosomal subunit protein uL4 from Methylobacillus flagellatus (strain ATCC 51484 / DSM 6875 / VKM B-1610 / KT).